Here is a 719-residue protein sequence, read N- to C-terminus: Penicillin-binding protein 1A (719 aa).

The transglycosylase stretch occupies residues 62 to 223; it reads LIADLGSERR…NQYDPYSHPE (162 aa). Catalysis depends on glutamate 91, which acts as the Proton donor; for transglycosylase activity. The tract at residues 297–611 is transpeptidase; the sequence is DVYTNVDQEA…RLTPLVGNGL (315 aa). Serine 370 serves as the catalytic Acyl-ester intermediate; for transpeptidase activity. Positions 652-719 are disordered; sequence ARSTWSSPAP…QNQNPQPAQP (68 aa). Residues 654 to 719 are compositionally biased toward low complexity; that stretch reads STWSSPAPQQ…QNQNPQPAQP (66 aa).

In the N-terminal section; belongs to the glycosyltransferase 51 family. It in the C-terminal section; belongs to the transpeptidase family. Interacts with MreC in the elongasome.

It localises to the secreted. The enzyme catalyses [GlcNAc-(1-&gt;4)-Mur2Ac(oyl-L-Ala-gamma-D-Glu-L-Lys-D-Ala-D-Ala)](n)-di-trans,octa-cis-undecaprenyl diphosphate + beta-D-GlcNAc-(1-&gt;4)-Mur2Ac(oyl-L-Ala-gamma-D-Glu-L-Lys-D-Ala-D-Ala)-di-trans,octa-cis-undecaprenyl diphosphate = [GlcNAc-(1-&gt;4)-Mur2Ac(oyl-L-Ala-gamma-D-Glu-L-Lys-D-Ala-D-Ala)](n+1)-di-trans,octa-cis-undecaprenyl diphosphate + di-trans,octa-cis-undecaprenyl diphosphate + H(+). It carries out the reaction Preferential cleavage: (Ac)2-L-Lys-D-Ala-|-D-Ala. Also transpeptidation of peptidyl-alanyl moieties that are N-acyl substituents of D-alanine.. The protein operates within cell wall biogenesis; peptidoglycan biosynthesis. In terms of biological role, cell wall formation. The sequence is that of Penicillin-binding protein 1A (pbpA) from Streptococcus pneumoniae (strain ATCC BAA-255 / R6).